Reading from the N-terminus, the 66-residue chain is Opicalcin-1 (66 aa).

Positions 1-22 are cleaved as a signal peptide; it reads MKPSLIIVTFIVVFMAISCVAA. The propeptide occupies 23–31; the sequence is DDEQETWIE. Cystine bridges form between Cys-36–Cys-50, Cys-43–Cys-54, and Cys-49–Cys-65. The essential for stimulation of [3H]ryanodine binding to RYR1 stretch occupies residues 55–57; the sequence is KRR.

The protein belongs to the scorpion calcin family. Expressed by the venom gland.

It is found in the secreted. This toxin stabilizes ryanodine receptor 1 (RyR1) opening in a long-lasting subconductance state (35% of the full conductance state). Furthermore, it triggers calcium release from sarcoplasmic vesicles (2 nM are enough to induce a sharp release, and 67% of the total calcium is released after toxin (100 nM) addition) probably by acting as a cell-penetrating peptide (CPP). In addition, it has been shown to dose-dependently stimulate ryanodine binding to RyR1 (EC(50)=0.3 nM). It also augments the bell-shaped calcium-[3H]ryanodine binding curve that is maximal at about 10 uM calcium concentration. It binds a different site as ryanodine. It acts synergistically with caffeine. In vivo, intracerebroventricular injection into mice induces neurotoxic symptoms, followed by death. In Opistophthalmus carinatus (African yellow leg scorpion), this protein is Opicalcin-1.